A 214-amino-acid chain; its full sequence is Elongation factor Ts (214 aa).

An involved in Mg(2+) ion dislocation from EF-Tu region spans residues 80-83 (TDFV).

It belongs to the EF-Ts family.

Its subcellular location is the cytoplasm. In terms of biological role, associates with the EF-Tu.GDP complex and induces the exchange of GDP to GTP. It remains bound to the aminoacyl-tRNA.EF-Tu.GTP complex up to the GTP hydrolysis stage on the ribosome. The polypeptide is Elongation factor Ts (Syntrophomonas wolfei subsp. wolfei (strain DSM 2245B / Goettingen)).